A 785-amino-acid polypeptide reads, in one-letter code: Conserved oligomeric Golgi complex subunit 4 (785 aa).

A disordered region spans residues 1 to 24 (MADFDSPPKLSGVQPPSEGVGGGR). Position 2 is an N-acetylalanine (A2). The interaction with SCFD1 stretch occupies residues 2–84 (ADFDSPPKLS…VTLHRMGPNL (83 aa)). The residue at position 6 (S6) is a Phosphoserine. Residues 85 to 153 (QLIEGDAKQL…TALRNEDYEQ (69 aa)) are interaction with STX5. The tract at residues 618-740 (PQVQPWINSF…SQMATILNLE (123 aa)) is d domain. The tract at residues 741–785 (RVTEILDYWGPNSGPLTWRLTPAEVRQVLALRIDFRSEDIKRLRL) is e domain; essential for proper cell surface glycosylation.

It belongs to the COG4 family. As to quaternary structure, monomer. Component of the conserved oligomeric Golgi (COG) complex which is composed of eight different subunits and is required for normal Golgi morphology and localization. Mediates interaction of SCFD1 with the COG complex. Interacts with STX5.

The protein localises to the cytoplasm. The protein resides in the cytosol. It is found in the golgi apparatus membrane. In terms of biological role, required for normal Golgi function. Plays a role in SNARE-pin assembly and Golgi-to-ER retrograde transport via its interaction with SCFD1. In Pongo abelii (Sumatran orangutan), this protein is Conserved oligomeric Golgi complex subunit 4 (COG4).